We begin with the raw amino-acid sequence, 111 residues long: MFGKAGLGGLMKQAQQMQENMKKAQAKLAETEIEGEAGNGLVKITMTCAHEVRKIDISPDLIQEAADDKEMLEDLILAALKSARDKAEETANKTMGAFAQGLPPGVGDFFR.

Belongs to the YbaB/EbfC family. As to quaternary structure, homodimer.

The protein resides in the cytoplasm. It localises to the nucleoid. Binds to DNA and alters its conformation. May be involved in regulation of gene expression, nucleoid organization and DNA protection. This is Nucleoid-associated protein NMCC_1355 from Neisseria meningitidis serogroup C (strain 053442).